The sequence spans 266 residues: 5'-nucleotidase SurE (266 aa).

Aspartate 8, aspartate 9, serine 39, and asparagine 93 together coordinate a divalent metal cation.

Belongs to the SurE nucleotidase family. A divalent metal cation is required as a cofactor.

Its subcellular location is the cytoplasm. The enzyme catalyses a ribonucleoside 5'-phosphate + H2O = a ribonucleoside + phosphate. Functionally, nucleotidase that shows phosphatase activity on nucleoside 5'-monophosphates. The chain is 5'-nucleotidase SurE from Pyrobaculum arsenaticum (strain DSM 13514 / JCM 11321 / PZ6).